A 75-amino-acid chain; its full sequence is Defensin-like protein 58 (75 aa).

The first 23 residues, 1 to 23, serve as a signal peptide directing secretion; it reads MNITKRYVVIFFLVMLTKSLSNS. 4 disulfide bridges follow: cysteine 39/cysteine 73, cysteine 43/cysteine 66, cysteine 52/cysteine 71, and cysteine 56/cysteine 72.

This sequence belongs to the DEFL family.

It localises to the secreted. This is Defensin-like protein 58 from Arabidopsis thaliana (Mouse-ear cress).